A 596-amino-acid polypeptide reads, in one-letter code: Linalool synthase TPS3, chloroplastic (596 aa).

The transit peptide at 1-39 directs the protein to the chloroplast; sequence MISSLNPLFTTHRSGVIAQQFFASSAAASINSVSSLKIA. 5 residues coordinate (2E)-geranyl diphosphate: Arg308, Asp345, Asp349, Arg486, and Asn489. Asp345 and Asp349 together coordinate Mg(2+). A DDXXD motif motif is present at residues 345–349; sequence DDIYD. Positions 489, 493, and 497 each coordinate Mg(2+).

It belongs to the terpene synthase family. Tpsb subfamily. In terms of assembly, monomer. Mg(2+) serves as cofactor. The cofactor is Mn(2+). Expressed in flowers and fruits.

The protein resides in the plastid. The protein localises to the chloroplast. The enzyme catalyses (2E)-geranyl diphosphate = beta-myrcene + diphosphate. It catalyses the reaction (2E)-geranyl diphosphate + H2O = linalool + diphosphate. The catalysed reaction is (2E)-geranyl diphosphate = (Z)-beta-ocimene + diphosphate. It carries out the reaction (2E)-geranyl diphosphate = (E)-beta-ocimene + diphosphate. Its pathway is secondary metabolite biosynthesis; terpenoid biosynthesis. Monoterpene synthase (mono-TPS) involved in the biosynthesis of monoterpenes natural products, constituent of coffee beverage aroma. Catalyzes the conversion of (2E)-geranyl diphosphate (GPP) into linalool and beta-myrcene, and, as minor products, cis-ocimene and trans-ocimene. Not able to use geranylgeranyl pyrophosphate (GGPP) and farnesyl pyrophosphate (FPP) as substrates. The polypeptide is Linalool synthase TPS3, chloroplastic (Coffea arabica (Arabian coffee)).